We begin with the raw amino-acid sequence, 127 residues long: Protein ApaG (127 aa).

Residues 3-127 (DDPRYRVEVE…FVLSVPRTLH (125 aa)) form the ApaG domain.

This Xanthomonas euvesicatoria pv. vesicatoria (strain 85-10) (Xanthomonas campestris pv. vesicatoria) protein is Protein ApaG.